A 579-amino-acid chain; its full sequence is Putative fatty-acid--CoA ligase fadD21 (579 aa).

This sequence belongs to the ATP-dependent AMP-binding enzyme family.

The chain is Putative fatty-acid--CoA ligase fadD21 (fadD21) from Mycobacterium leprae (strain TN).